The chain runs to 710 residues: Pentatricopeptide repeat-containing protein At5g39680 (710 aa).

Ser2 carries the N-acetylserine modification. PPR repeat units lie at residues 35 to 64 (NELL…NQSS), 68 to 98 (DAYQ…MPER), 99 to 133 (NVVS…GESR), 135 to 169 (NEFV…GLIS), 170 to 200 (HEFV…LPYC), 201 to 235 (DLSV…DFVW), 236 to 270 (NNLT…GFNA), 271 to 301 (EVEA…THAQ), 302 to 336 (NIFL…EVPP), 337 to 371 (NEYT…GYRN), 372 to 402 (HVMV…MTFR), 403 to 437 (DIVT…GEIP), 438 to 473 (NRIT…DVQP), and 474 to 504 (DIQH…APIE). Residues 509-584 (AWRTLLNACY…EPGVSWIGIR (76 aa)) form a type E motif region. The interval 585–615 (NQTHVFLAEDNQHPEITLIYAKVKEVMSKIK) is type E(+) motif. A type DYW motif region spans residues 616–710 (PLGYSPDVAG…DGQCSCCDYW (95 aa)).

It belongs to the PPR family. PCMP-H subfamily.

In Arabidopsis thaliana (Mouse-ear cress), this protein is Pentatricopeptide repeat-containing protein At5g39680 (EMB2744).